Reading from the N-terminus, the 327-residue chain is DNA-directed RNA polymerase subunit alpha (327 aa).

Residues 1 to 233 (MVREKVKVST…NLFIPFLHVE (233 aa)) are alpha N-terminal domain (alpha-NTD). The tract at residues 264-327 (TKELAFQYIF…KKILDILEKK (64 aa)) is alpha C-terminal domain (alpha-CTD).

The protein belongs to the RNA polymerase alpha chain family. In terms of assembly, in plastids the minimal PEP RNA polymerase catalytic core is composed of four subunits: alpha, beta, beta', and beta''. When a (nuclear-encoded) sigma factor is associated with the core the holoenzyme is formed, which can initiate transcription.

Its subcellular location is the plastid. The protein resides in the chloroplast. It catalyses the reaction RNA(n) + a ribonucleoside 5'-triphosphate = RNA(n+1) + diphosphate. DNA-dependent RNA polymerase catalyzes the transcription of DNA into RNA using the four ribonucleoside triphosphates as substrates. The chain is DNA-directed RNA polymerase subunit alpha from Capsella bursa-pastoris (Shepherd's purse).